A 143-amino-acid polypeptide reads, in one-letter code: Hemoglobin subunit alpha-2 (143 aa).

Serine 2 is subject to N-acetylserine. The 142-residue stretch at 2–143 folds into the Globin domain; sequence SLSAKDKATV…LALALSEKYR (142 aa). Histidine 60 is a binding site for O2. Position 89 (histidine 89) interacts with heme b.

The protein belongs to the globin family. In terms of assembly, hb 2 is a heterotetramer of two alpha-2 and two beta-1 chains. Hb 3 is a heterotetramer of two alpha-2 and two beta-2 chains. In terms of tissue distribution, red blood cells.

Its function is as follows. Involved in oxygen transport from gills to the various peripheral tissues. This Boreogadus saida (Polar cod) protein is Hemoglobin subunit alpha-2 (hba2).